The primary structure comprises 467 residues: Mitochondrial distribution and morphology protein 10 (467 aa).

Residues 361-393 (GLPDTAPSRNRECDDLPPPRRDNYHHQRSPHAS) are disordered. Basic and acidic residues predominate over residues 369–385 (RNRECDDLPPPRRDNYH).

This sequence belongs to the MDM10 family. In terms of assembly, component of the ER-mitochondria encounter structure (ERMES) or MDM complex, composed of MMM1, MDM10, MDM12 and MDM34. Associates with the mitochondrial outer membrane sorting assembly machinery SAM(core) complex.

The protein localises to the mitochondrion outer membrane. Its function is as follows. Component of the ERMES/MDM complex, which serves as a molecular tether to connect the endoplasmic reticulum and mitochondria. Components of this complex are involved in the control of mitochondrial shape and protein biogenesis and may function in phospholipid exchange. MDM10 is involved in the late assembly steps of the general translocase of the mitochondrial outer membrane (TOM complex). Functions in the TOM40-specific route of the assembly of outer membrane beta-barrel proteins, including the association of TOM40 with the receptor TOM22 and small TOM proteins. Can associate with the SAM(core) complex as well as the MDM12-MMM1 complex, both involved in late steps of the major beta-barrel assembly pathway, that is responsible for biogenesis of all outer membrane beta-barrel proteins. May act as a switch that shuttles between both complexes and channels precursor proteins into the TOM40-specific pathway. Plays a role in mitochondrial morphology and in the inheritance of mitochondria. The chain is Mitochondrial distribution and morphology protein 10 from Ajellomyces capsulatus (strain NAm1 / WU24) (Darling's disease fungus).